The following is a 555-amino-acid chain: Glucose-6-phosphate isomerase (555 aa).

Residue E353 is the Proton donor of the active site. Residues H384 and K516 contribute to the active site.

The protein belongs to the GPI family.

Its subcellular location is the cytoplasm. It carries out the reaction alpha-D-glucose 6-phosphate = beta-D-fructose 6-phosphate. It functions in the pathway carbohydrate biosynthesis; gluconeogenesis. It participates in carbohydrate degradation; glycolysis; D-glyceraldehyde 3-phosphate and glycerone phosphate from D-glucose: step 2/4. Functionally, catalyzes the reversible isomerization of glucose-6-phosphate to fructose-6-phosphate. In Methylobacillus flagellatus (strain ATCC 51484 / DSM 6875 / VKM B-1610 / KT), this protein is Glucose-6-phosphate isomerase.